A 260-amino-acid polypeptide reads, in one-letter code: D-threitol dehydrogenase (260 aa).

Residue 21–50 (LVTGAASGIGAAIASAYATKGARIAAVDLN) participates in NAD(+) binding. Tyr-166 serves as the catalytic Proton acceptor. Lys-170 contributes to the NAD(+) binding site.

This sequence belongs to the short-chain dehydrogenases/reductases (SDR) family.

It carries out the reaction D-threitol + NAD(+) = D-erythrulose + NADH + H(+). Its pathway is carbohydrate metabolism; D-threitol degradation. Catalyzes the NAD-dependent reversible oxidation of D-threitol. Involved in the degradation pathway of D-threitol, that allows M.smegmatis to grow on this compound as the sole carbon source. Does not catalyze the oxidation of xylitol, L-sorbitol, and L-sorbose. The chain is D-threitol dehydrogenase from Mycolicibacterium smegmatis (strain ATCC 700084 / mc(2)155) (Mycobacterium smegmatis).